A 380-amino-acid polypeptide reads, in one-letter code: Two-component response regulator ORR28 (380 aa).

The Response regulatory domain maps to 13-130 (SAMVIDEDKC…TIQNLWQHLD (118 aa)). Residue Asp65 is modified to 4-aspartylphosphate. The myb-like GARP DNA-binding region spans 169-223 (RKYYLMWTPHLQKKFLHALEILGEGQISLMIMDVDNIDRKQISTHLQKHRLQLKK). Residues 225 to 245 (LSKASFTKGSNEDTSNPSAKN) form a disordered region. The span at 228–245 (ASFTKGSNEDTSNPSAKN) shows a compositional bias: polar residues.

This sequence belongs to the ARR family. Type-B subfamily. In terms of processing, two-component system major event consists of a His-to-Asp phosphorelay between a sensor histidine kinase (HK) and a response regulator (RR). In plants, the His-to-Asp phosphorelay involves an additional intermediate named Histidine-containing phosphotransfer protein (HPt). This multistep phosphorelay consists of a His-Asp-His-Asp sequential transfer of a phosphate group between first a His and an Asp of the HK protein, followed by the transfer to a conserved His of the HPt protein and finally the transfer to an Asp in the receiver domain of the RR protein.

Its subcellular location is the nucleus. Its function is as follows. Transcriptional activator that binds specific DNA sequence. Functions as a response regulator involved in His-to-Asp phosphorelay signal transduction system. Phosphorylation of the Asp residue in the receiver domain activates the ability of the protein to promote the transcription of target genes. May directly activate some type-A response regulators in response to cytokinins. The polypeptide is Two-component response regulator ORR28 (Oryza sativa subsp. indica (Rice)).